Reading from the N-terminus, the 357-residue chain is DNA replication and repair protein RecF (357 aa).

Position 30 to 37 (30 to 37 (GANGSGKT)) interacts with ATP.

The protein belongs to the RecF family.

It localises to the cytoplasm. In terms of biological role, the RecF protein is involved in DNA metabolism; it is required for DNA replication and normal SOS inducibility. RecF binds preferentially to single-stranded, linear DNA. It also seems to bind ATP. This Escherichia coli O139:H28 (strain E24377A / ETEC) protein is DNA replication and repair protein RecF.